A 201-amino-acid chain; its full sequence is Large ribosomal subunit protein bL25 (201 aa).

Belongs to the bacterial ribosomal protein bL25 family. CTC subfamily. Part of the 50S ribosomal subunit; part of the 5S rRNA/L5/L18/L25 subcomplex. Contacts the 5S rRNA. Binds to the 5S rRNA independently of L5 and L18.

Functionally, this is one of the proteins that binds to the 5S RNA in the ribosome where it forms part of the central protuberance. This is Large ribosomal subunit protein bL25 from Burkholderia vietnamiensis (strain G4 / LMG 22486) (Burkholderia cepacia (strain R1808)).